We begin with the raw amino-acid sequence, 327 residues long: Complex I intermediate-associated protein 30, mitochondrial (327 aa).

The transit peptide at 1-24 (MALVHKLLRDTYILRKFSKPTSAL) directs the protein to the mitochondrion. The interval 42 to 63 (PVASPGKASSQRKTEGDLQGDH) is disordered. Basic and acidic residues predominate over residues 53–63 (RKTEGDLQGDH). S318 carries the post-translational modification Phosphoserine.

It belongs to the CIA30 family. Part of the mitochondrial complex I assembly/MCIA complex that comprises at least the core subunits TMEM126B, NDUFAF1, ECSIT and ACAD9 and complement subunits such as COA1 and TMEM186. Interacts with ECSIT. Interacts with ACAD9. At early stages of complex I assembly, it is found in intermediate subcomplexes that contain different subunits including NDUFB6, NDUFA6, NDUFA9, NDUFS3, NDUFS7, ND1, ND2 and ND3. Interacts with TMEM70 and TMEM242.

The protein resides in the mitochondrion. It localises to the mitochondrion matrix. In terms of biological role, as part of the MCIA complex, involved in the assembly of the mitochondrial complex I. This Gorilla gorilla gorilla (Western lowland gorilla) protein is Complex I intermediate-associated protein 30, mitochondrial.